The sequence spans 31 residues: Cliotide T11 (31 aa).

Positions G1 to N31 form a cross-link, cyclopeptide (Gly-Asn). Intrachain disulfides connect C4-C21, C8-C23, and C13-C28.

Contains 3 disulfide bonds. Post-translationally, this is a cyclic peptide. Expressed in seed but not in root, nodule, flower, stem, shoot, leaf and pod (at protein level).

In terms of biological role, probably participates in a plant defense mechanism. This Clitoria ternatea (Butterfly pea) protein is Cliotide T11.